A 209-amino-acid polypeptide reads, in one-letter code: A-type ATP synthase subunit D (209 aa).

The protein belongs to the V-ATPase D subunit family. Has multiple subunits, A(3), B(3), C, D, E, F, G, I and K(x); there may be a few other subunits as well.

Its subcellular location is the cell membrane. Functionally, component of the A-type ATP synthase that produces ATP from ADP in the presence of a proton gradient across the membrane. The sequence is that of A-type ATP synthase subunit D from Methanosarcina mazei (strain ATCC BAA-159 / DSM 3647 / Goe1 / Go1 / JCM 11833 / OCM 88) (Methanosarcina frisia).